The primary structure comprises 192 residues: uncharacterized protein (192 aa).

The region spanning 29 to 160 (QRQAAVLVPI…PLDIHRRGND (132 aa)) is the Nudix hydrolase domain. Residues 67–89 (GAVDNTDATLIAAALREAQEEVA) carry the Nudix box motif. Mg(2+) contacts are provided by Glu83 and Glu87.

This sequence belongs to the Nudix hydrolase family. PCD1 subfamily. Requires Mn(2+) as cofactor. Mg(2+) is required as a cofactor.

Probably mediates the hydrolysis of some nucleoside diphosphate derivatives. This is an uncharacterized protein from Klebsiella pneumoniae subsp. pneumoniae (strain ATCC 700721 / MGH 78578).